The sequence spans 732 residues: Acylamino-acid-releasing enzyme (732 aa).

Met1 is subject to N-acetylmethionine. Ser185 and Ser187 each carry phosphoserine. Catalysis depends on charge relay system residues Ser587, Asp675, and His707.

Homotetramer. Expressed in erythrocytes (at protein level).

The protein resides in the cytoplasm. It carries out the reaction Cleavage of an N-acetyl or N-formyl amino acid from the N-terminus of a polypeptide.. Its activity is regulated as follows. Homotetramerization is required for activity. Tetramerization results in the formation of a gated channel which is involved in substrate selection and substrate access to the catalytic sites. Its function is as follows. This enzyme catalyzes the hydrolysis of the N-terminal peptide bond of an N-acetylated peptide to generate an N-acetylated amino acid and a peptide with a free N-terminus. It preferentially cleaves off Ac-Ala, Ac-Met and Ac-Ser. Also, involved in the degradation of oxidized and glycated proteins. This chain is Acylamino-acid-releasing enzyme (APEH), found in Homo sapiens (Human).